Reading from the N-terminus, the 1577-residue chain is Probable serine/threonine-protein kinase gdt9 (1577 aa).

Residues 1–16 (MKTFLLIFLLICVCKG) form the signal peptide. Over 17–966 (ITNITTPSIY…NNEDNHKKLV (950 aa)) the chain is Extracellular. Residues 967-987 (IALSVSIPVAALLVILCFGIF) traverse the membrane as a helical segment. Residues 988–1577 (ICYNNNKKNK…SLVKIFKRFN (590 aa)) lie on the Cytoplasmic side of the membrane. A compositionally biased stretch (basic and acidic residues) spans 998-1014 (NETKGKDIETNTDKKDD). 2 disordered regions span residues 998-1019 (NETKGKDIETNTDKKDDENENE) and 1050-1128 (TLPP…FPTI). Residues 1050 to 1082 (TLPPQSTISIDTSPSSENTTFTESLTPKKSATV) are compositionally biased toward polar residues. Residues 1091–1115 (NSTNESTVSNSSSENNSDNNNNNNN) are compositionally biased toward low complexity. Positions 1290 to 1573 (LDFDEICGQG…EIVFSLVKIF (284 aa)) constitute a Protein kinase domain. ATP-binding positions include 1296–1304 (CGQGTYGMV) and lysine 1317. Catalysis depends on aspartate 1436, which acts as the Proton acceptor.

It in the N-terminal section; belongs to the GDT family. This sequence in the C-terminal section; belongs to the protein kinase superfamily. TKL Ser/Thr protein kinase family.

It localises to the membrane. The enzyme catalyses L-seryl-[protein] + ATP = O-phospho-L-seryl-[protein] + ADP + H(+). It carries out the reaction L-threonyl-[protein] + ATP = O-phospho-L-threonyl-[protein] + ADP + H(+). In Dictyostelium discoideum (Social amoeba), this protein is Probable serine/threonine-protein kinase gdt9 (gdt9).